A 403-amino-acid polypeptide reads, in one-letter code: CCA-adding enzyme (403 aa).

G32 and R35 together coordinate ATP. The CTP site is built by G32 and R35. Mg(2+) is bound by residues D45 and D47. ATP-binding residues include R116, D159, R162, R165, and R168. 5 residues coordinate CTP: R116, D159, R162, R165, and R168.

Belongs to the tRNA nucleotidyltransferase/poly(A) polymerase family. Bacterial CCA-adding enzyme type 3 subfamily. In terms of assembly, homodimer. Mg(2+) serves as cofactor.

The enzyme catalyses a tRNA precursor + 2 CTP + ATP = a tRNA with a 3' CCA end + 3 diphosphate. It carries out the reaction a tRNA with a 3' CCA end + 2 CTP + ATP = a tRNA with a 3' CCACCA end + 3 diphosphate. Functionally, catalyzes the addition and repair of the essential 3'-terminal CCA sequence in tRNAs without using a nucleic acid template. Adds these three nucleotides in the order of C, C, and A to the tRNA nucleotide-73, using CTP and ATP as substrates and producing inorganic pyrophosphate. tRNA 3'-terminal CCA addition is required both for tRNA processing and repair. Also involved in tRNA surveillance by mediating tandem CCA addition to generate a CCACCA at the 3' terminus of unstable tRNAs. While stable tRNAs receive only 3'-terminal CCA, unstable tRNAs are marked with CCACCA and rapidly degraded. The chain is CCA-adding enzyme from Leuconostoc citreum (strain KM20).